The following is a 472-amino-acid chain: Carboxypeptidase Q (472 aa).

An N-terminal signal peptide occupies residues 1–20 (MKFLIFAFFGGVHLLSLCSG). A propeptide spanning residues 21-44 (KAICKNGISKRTFEEIKEEIASCG) is cleaved from the precursor. 2 N-linked (GlcNAc...) asparagine glycosylation sites follow: Asn-61 and Asn-179. Zn(2+) contacts are provided by His-290 and Asp-302. The active-site Nucleophile is the Glu-336. Glu-337 is a Zn(2+) binding site. 2 N-linked (GlcNAc...) asparagine glycosylation sites follow: Asn-353 and Asn-356. Asp-364 contacts Zn(2+). Asn-396 carries an N-linked (GlcNAc...) asparagine glycan. His-434 contacts Zn(2+).

The protein belongs to the peptidase M28 family. Homodimer. The monomeric form is inactive while the homodimer is active. Post-translationally, N-glycosylated. The secreted form is modified by hybrid or complex type oligosaccharide chains. As to expression, mainly detected in blood plasma. Abundant in placenta and kidney. Present at low level in muscles, liver and skin fibroblasts. Not detected in brain or white blood cells (at protein level).

It localises to the endoplasmic reticulum. The protein localises to the golgi apparatus. The protein resides in the lysosome. It is found in the secreted. In terms of biological role, carboxypeptidase that may play an important role in the hydrolysis of circulating peptides. Catalyzes the hydrolysis of dipeptides with unsubstituted terminals into amino acids. May play a role in the liberation of thyroxine hormone from its thyroglobulin (Tg) precursor. This Homo sapiens (Human) protein is Carboxypeptidase Q (CPQ).